The following is a 319-amino-acid chain: tRNA uridine(34) hydroxylase (319 aa).

The Rhodanese domain maps to 124–218 (LDEDTVILDA…YGKNEETKGE (95 aa)). Cys-178 acts as the Cysteine persulfide intermediate in catalysis.

It belongs to the TrhO family.

It catalyses the reaction uridine(34) in tRNA + AH2 + O2 = 5-hydroxyuridine(34) in tRNA + A + H2O. Its function is as follows. Catalyzes oxygen-dependent 5-hydroxyuridine (ho5U) modification at position 34 in tRNAs. This is tRNA uridine(34) hydroxylase from Listeria welshimeri serovar 6b (strain ATCC 35897 / DSM 20650 / CCUG 15529 / CIP 8149 / NCTC 11857 / SLCC 5334 / V8).